Here is a 186-residue protein sequence, read N- to C-terminus: Large ribosomal subunit protein uL10 (186 aa).

It belongs to the universal ribosomal protein uL10 family. Part of the ribosomal stalk of the 50S ribosomal subunit. The N-terminus interacts with L11 and the large rRNA to form the base of the stalk. The C-terminus forms an elongated spine to which L12 dimers bind in a sequential fashion forming a multimeric L10(L12)X complex.

Functionally, forms part of the ribosomal stalk, playing a central role in the interaction of the ribosome with GTP-bound translation factors. This Rhodococcus jostii (strain RHA1) protein is Large ribosomal subunit protein uL10.